Here is a 334-residue protein sequence, read N- to C-terminus: Proline-serine-threonine phosphatase-interacting protein 2 (334 aa).

An F-BAR domain is found at 4–264 (SLFKGNFWST…SLETCSIEKD (261 aa)). Residues 66–163 (GQSEINTLKR…AEQAVHRSAN (98 aa)) are a coiled coil. Positions 288–322 (YSPQRNAAPPGKTTGPNPARRGPLPVPKRIPDDPD) are disordered. Phosphotyrosine occurs at positions 323 and 329.

Phosphorylated on tyrosine. Expressed in macrophage-containing tissues, including bone marrow, spleen, liver, kidney, intestine and brain.

The protein resides in the cytoplasm. It is found in the membrane. In terms of biological role, binds to F-actin. May be involved in regulation of the actin cytoskeleton. In Mus musculus (Mouse), this protein is Proline-serine-threonine phosphatase-interacting protein 2 (Pstpip2).